We begin with the raw amino-acid sequence, 29 residues long: Trypsin inhibitor 3 (29 aa).

3 disulfides stabilise this stretch: cysteine 3-cysteine 20, cysteine 10-cysteine 22, and cysteine 16-cysteine 28.

Belongs to the protease inhibitor I7 (squash-type serine protease inhibitor) family.

The protein localises to the secreted. Its function is as follows. Strongly inhibits trypsin, weakly inhibits chymotrypsin. The sequence is that of Trypsin inhibitor 3 from Cyclanthera pedata (Achocha).